Consider the following 192-residue polypeptide: Fe/S biogenesis protein NfuA (192 aa).

2 residues coordinate [4Fe-4S] cluster: cysteine 149 and cysteine 152.

Belongs to the NfuA family. In terms of assembly, homodimer. It depends on [4Fe-4S] cluster as a cofactor.

Involved in iron-sulfur cluster biogenesis. Binds a 4Fe-4S cluster, can transfer this cluster to apoproteins, and thereby intervenes in the maturation of Fe/S proteins. Could also act as a scaffold/chaperone for damaged Fe/S proteins. The sequence is that of Fe/S biogenesis protein NfuA from Aeromonas hydrophila subsp. hydrophila (strain ATCC 7966 / DSM 30187 / BCRC 13018 / CCUG 14551 / JCM 1027 / KCTC 2358 / NCIMB 9240 / NCTC 8049).